A 274-amino-acid chain; its full sequence is Diaminopimelate epimerase (274 aa).

N11, Q44, and N64 together coordinate substrate. Residue C73 is the Proton donor of the active site. Substrate-binding positions include 74-75, N157, N190, and 208-209; these read GN and ER. Residue C217 is the Proton acceptor of the active site. Residue 218 to 219 participates in substrate binding; it reads GS.

It belongs to the diaminopimelate epimerase family. In terms of assembly, homodimer.

The protein resides in the cytoplasm. The catalysed reaction is (2S,6S)-2,6-diaminopimelate = meso-2,6-diaminopimelate. Its pathway is amino-acid biosynthesis; L-lysine biosynthesis via DAP pathway; DL-2,6-diaminopimelate from LL-2,6-diaminopimelate: step 1/1. Its function is as follows. Catalyzes the stereoinversion of LL-2,6-diaminopimelate (L,L-DAP) to meso-diaminopimelate (meso-DAP), a precursor of L-lysine and an essential component of the bacterial peptidoglycan. The protein is Diaminopimelate epimerase of Histophilus somni (strain 129Pt) (Haemophilus somnus).